A 604-amino-acid polypeptide reads, in one-letter code: Glucose-methanol-choline family oxidoreductase mfmG (604 aa).

A signal peptide spans 1 to 24; sequence MYMLRPSSLLLATGLLNQGSSVLA. Asn32 carries N-linked (GlcNAc...) asparagine glycosylation. FAD is bound by residues 44–45 and 65–66; these read TA and EA. N-linked (GlcNAc...) asparagine glycans are attached at residues Asn76 and Asn97. 126 to 129 is a binding site for FAD; sequence NFMA. Residues Asn260, Asn265, Asn401, and Asn460 are each glycosylated (N-linked (GlcNAc...) asparagine). Catalysis depends on His538, which acts as the Proton acceptor. FAD-binding positions include Ala572 and 584–585; that span reads PQ.

The protein belongs to the GMC oxidoreductase family. In terms of assembly, homodimer. FAD is required as a cofactor.

Functionally, oxidoreductase; part of the gene cluster that mediates the biosynthesis of the phthalide-terpenoid hybrid 11'-O-desmethylfendlerol. MfmG seems not to be involved directly in the biosynthesis of 11'-O-desmethylfendlerol and its role has still to be determined. The biosynthesis of 11'-O-desmethylfendlerol begins with the NR-PKS mfmB that forms 3,5-dimethylorsellinic acid (DMOA), which is then transformed into the phthalide 5,7-dihydroxy-4-(hydroxymethyl)-6-methylphthalide by the cytochrome P450 monooxygenase mfmA and the hydrolase mfmC. Subsequently, the methyltransferase mfmE catalyzes 7-O-methylation to yield 5-hydroxy-4-(hydroxymethyl)-7-methoxy-6-methylphthalide, which undergoes C-3 hydroxylation by the cytochrome P450 monooxygenase mfmF. The resultant cyclopolic acid (2,5-dihydroxy-4-(hydroxymethyl)-7-methoxy-6-methylphthalide) is then farnesylated by the DMATS-type prenyltransferase mfmD to afford 5-O-farnesylcyclopolic acid. Finally, the Pyr4-family terpene cyclase mfmH cyclizes the farnesyl moiety of 5-O-farnesylcyclopolic acid into a drimane-like structure, thus completing the biosynthesis of 11'-O-desmethylfendlerol. The polypeptide is Glucose-methanol-choline family oxidoreductase mfmG (Annulohypoxylon moriforme (Filamentous fungus)).